The chain runs to 696 residues: DNA topoisomerase 6 subunit B (696 aa).

Residues 1–36 (MDDDAGDGAASGGTKRKVTAASSSAAAKGKAAGKGK) are disordered. The segment covering 20–36 (AASSSAAAKGKAAGKGK) has biased composition (low complexity). Residues Asn-88, Asp-187, 208-209 (TK), 217-224 (GKFGLGAK), and Lys-543 each bind ATP.

It belongs to the TOP6B family. Homodimer. Heterotetramer of two TOP6A and two TOP6B subunits. Interacts with SPO11-4.

Its subcellular location is the nucleus. The enzyme catalyses ATP-dependent breakage, passage and rejoining of double-stranded DNA.. Its function is as follows. Component of the DNA topoisomerase VI involved in chromatin organization and progression of endoreduplication cycles. Relaxes both positive and negative superturns and exhibits a strong decatenase activity. The B subunit binds ATP. The protein is DNA topoisomerase 6 subunit B (TOP6B) of Oryza sativa subsp. japonica (Rice).